The following is a 424-amino-acid chain: GTPase Obg (424 aa).

Residues 1–158 enclose the Obg domain; that stretch reads MFIDTAKILV…RMINLEIKLL (158 aa). An OBG-type G domain is found at 159–331; sequence ADVGLIGFPN…LIKEVTRQLS (173 aa). GTP is bound by residues 165 to 172, 190 to 194, 212 to 215, 282 to 285, and 312 to 314; these read GFPNVGKS, FTTLK, DIPG, NKID, and SAA. The Mg(2+) site is built by serine 172 and threonine 192. The OCT domain occupies 345–424; that stretch reads RFMPEEKRFT…LNDFEFDFLL (80 aa).

The protein belongs to the TRAFAC class OBG-HflX-like GTPase superfamily. OBG GTPase family. Monomer. Requires Mg(2+) as cofactor.

The protein localises to the cytoplasm. Its function is as follows. An essential GTPase which binds GTP, GDP and possibly (p)ppGpp with moderate affinity, with high nucleotide exchange rates and a fairly low GTP hydrolysis rate. Plays a role in control of the cell cycle, stress response, ribosome biogenesis and in those bacteria that undergo differentiation, in morphogenesis control. The sequence is that of GTPase Obg from Clostridium novyi (strain NT).